The following is a 258-amino-acid chain: Imidazole glycerol phosphate synthase subunit HisF (258 aa).

Residues aspartate 11 and aspartate 130 contribute to the active site.

It belongs to the HisA/HisF family. Heterodimer of HisH and HisF.

It localises to the cytoplasm. It catalyses the reaction 5-[(5-phospho-1-deoxy-D-ribulos-1-ylimino)methylamino]-1-(5-phospho-beta-D-ribosyl)imidazole-4-carboxamide + L-glutamine = D-erythro-1-(imidazol-4-yl)glycerol 3-phosphate + 5-amino-1-(5-phospho-beta-D-ribosyl)imidazole-4-carboxamide + L-glutamate + H(+). It participates in amino-acid biosynthesis; L-histidine biosynthesis; L-histidine from 5-phospho-alpha-D-ribose 1-diphosphate: step 5/9. Functionally, IGPS catalyzes the conversion of PRFAR and glutamine to IGP, AICAR and glutamate. The HisF subunit catalyzes the cyclization activity that produces IGP and AICAR from PRFAR using the ammonia provided by the HisH subunit. The chain is Imidazole glycerol phosphate synthase subunit HisF from Bradyrhizobium sp. (strain ORS 278).